We begin with the raw amino-acid sequence, 159 residues long: Ribosome-binding factor A (159 aa).

A disordered region spans residues threonine 127–serine 159. Residues aspartate 142 to serine 159 show a composition bias toward acidic residues.

The protein belongs to the RbfA family. Monomer. Binds 30S ribosomal subunits, but not 50S ribosomal subunits or 70S ribosomes.

The protein localises to the cytoplasm. In terms of biological role, one of several proteins that assist in the late maturation steps of the functional core of the 30S ribosomal subunit. Associates with free 30S ribosomal subunits (but not with 30S subunits that are part of 70S ribosomes or polysomes). Required for efficient processing of 16S rRNA. May interact with the 5'-terminal helix region of 16S rRNA. The polypeptide is Ribosome-binding factor A (Beutenbergia cavernae (strain ATCC BAA-8 / DSM 12333 / CCUG 43141 / JCM 11478 / NBRC 16432 / NCIMB 13614 / HKI 0122)).